Consider the following 122-residue polypeptide: Small ribosomal subunit protein bS6 (122 aa).

This sequence belongs to the bacterial ribosomal protein bS6 family.

Functionally, binds together with bS18 to 16S ribosomal RNA. The sequence is that of Small ribosomal subunit protein bS6 from Trichlorobacter lovleyi (strain ATCC BAA-1151 / DSM 17278 / SZ) (Geobacter lovleyi).